The sequence spans 122 residues: Small ribosomal subunit protein uS13 (122 aa).

The disordered stretch occupies residues 99-122 (RGQRTHTNARTRKGPAKAIAGKKK).

This sequence belongs to the universal ribosomal protein uS13 family. As to quaternary structure, part of the 30S ribosomal subunit. Forms a loose heterodimer with protein S19. Forms two bridges to the 50S subunit in the 70S ribosome.

Its function is as follows. Located at the top of the head of the 30S subunit, it contacts several helices of the 16S rRNA. In the 70S ribosome it contacts the 23S rRNA (bridge B1a) and protein L5 of the 50S subunit (bridge B1b), connecting the 2 subunits; these bridges are implicated in subunit movement. Contacts the tRNAs in the A and P-sites. The sequence is that of Small ribosomal subunit protein uS13 from Bradyrhizobium diazoefficiens (strain JCM 10833 / BCRC 13528 / IAM 13628 / NBRC 14792 / USDA 110).